The chain runs to 291 residues: Acetyl-coenzyme A carboxylase carboxyl transferase subunit beta (291 aa).

The 263-residue stretch at 29–291 (IMTKCPQCKK…TGGEREWLEN (263 aa)) folds into the CoA carboxyltransferase N-terminal domain. The Zn(2+) site is built by cysteine 33, cysteine 36, cysteine 52, and cysteine 55. The C4-type zinc-finger motif lies at 33–55 (CPQCKKIMLTKELDKNLRVCMNC).

The protein belongs to the AccD/PCCB family. In terms of assembly, acetyl-CoA carboxylase is a heterohexamer composed of biotin carboxyl carrier protein (AccB), biotin carboxylase (AccC) and two subunits each of ACCase subunit alpha (AccA) and ACCase subunit beta (AccD). Zn(2+) serves as cofactor.

The protein localises to the cytoplasm. The catalysed reaction is N(6)-carboxybiotinyl-L-lysyl-[protein] + acetyl-CoA = N(6)-biotinyl-L-lysyl-[protein] + malonyl-CoA. It participates in lipid metabolism; malonyl-CoA biosynthesis; malonyl-CoA from acetyl-CoA: step 1/1. In terms of biological role, component of the acetyl coenzyme A carboxylase (ACC) complex. Biotin carboxylase (BC) catalyzes the carboxylation of biotin on its carrier protein (BCCP) and then the CO(2) group is transferred by the transcarboxylase to acetyl-CoA to form malonyl-CoA. The chain is Acetyl-coenzyme A carboxylase carboxyl transferase subunit beta from Bacillus pumilus (strain SAFR-032).